The chain runs to 480 residues: Methylenetetrahydrofolate--tRNA-(uracil-5-)-methyltransferase TrmFO (480 aa).

15–20 (GGGLAG) is a binding site for FAD.

This sequence belongs to the MnmG family. TrmFO subfamily. FAD serves as cofactor.

The protein localises to the cytoplasm. The catalysed reaction is uridine(54) in tRNA + (6R)-5,10-methylene-5,6,7,8-tetrahydrofolate + NADH + H(+) = 5-methyluridine(54) in tRNA + (6S)-5,6,7,8-tetrahydrofolate + NAD(+). It carries out the reaction uridine(54) in tRNA + (6R)-5,10-methylene-5,6,7,8-tetrahydrofolate + NADPH + H(+) = 5-methyluridine(54) in tRNA + (6S)-5,6,7,8-tetrahydrofolate + NADP(+). Its function is as follows. Catalyzes the folate-dependent formation of 5-methyl-uridine at position 54 (M-5-U54) in all tRNAs. The protein is Methylenetetrahydrofolate--tRNA-(uracil-5-)-methyltransferase TrmFO of Sinorhizobium medicae (strain WSM419) (Ensifer medicae).